We begin with the raw amino-acid sequence, 329 residues long: 4-hydroxy-3-methylbut-2-enyl diphosphate reductase 1 (329 aa).

Cys-29 contacts [4Fe-4S] cluster. 2 residues coordinate (2E)-4-hydroxy-3-methylbut-2-enyl diphosphate: His-58 and His-95. Dimethylallyl diphosphate-binding residues include His-58 and His-95. Isopentenyl diphosphate is bound by residues His-58 and His-95. Position 117 (Cys-117) interacts with [4Fe-4S] cluster. Residue His-145 coordinates (2E)-4-hydroxy-3-methylbut-2-enyl diphosphate. Residue His-145 coordinates dimethylallyl diphosphate. Residue His-145 coordinates isopentenyl diphosphate. Glu-147 serves as the catalytic Proton donor. Thr-185 serves as a coordination point for (2E)-4-hydroxy-3-methylbut-2-enyl diphosphate. Cys-215 is a binding site for [4Fe-4S] cluster. (2E)-4-hydroxy-3-methylbut-2-enyl diphosphate-binding residues include Ser-243, Ser-244, Asn-245, and Ser-287. Dimethylallyl diphosphate-binding residues include Ser-243, Ser-244, Asn-245, and Ser-287. The isopentenyl diphosphate site is built by Ser-243, Ser-244, Asn-245, and Ser-287.

This sequence belongs to the IspH family. The cofactor is [4Fe-4S] cluster.

It catalyses the reaction isopentenyl diphosphate + 2 oxidized [2Fe-2S]-[ferredoxin] + H2O = (2E)-4-hydroxy-3-methylbut-2-enyl diphosphate + 2 reduced [2Fe-2S]-[ferredoxin] + 2 H(+). The enzyme catalyses dimethylallyl diphosphate + 2 oxidized [2Fe-2S]-[ferredoxin] + H2O = (2E)-4-hydroxy-3-methylbut-2-enyl diphosphate + 2 reduced [2Fe-2S]-[ferredoxin] + 2 H(+). It functions in the pathway isoprenoid biosynthesis; dimethylallyl diphosphate biosynthesis; dimethylallyl diphosphate from (2E)-4-hydroxy-3-methylbutenyl diphosphate: step 1/1. It participates in isoprenoid biosynthesis; isopentenyl diphosphate biosynthesis via DXP pathway; isopentenyl diphosphate from 1-deoxy-D-xylulose 5-phosphate: step 6/6. Its function is as follows. Catalyzes the conversion of 1-hydroxy-2-methyl-2-(E)-butenyl 4-diphosphate (HMBPP) into a mixture of isopentenyl diphosphate (IPP) and dimethylallyl diphosphate (DMAPP). Acts in the terminal step of the DOXP/MEP pathway for isoprenoid precursor biosynthesis. This chain is 4-hydroxy-3-methylbut-2-enyl diphosphate reductase 1, found in Mycobacterium tuberculosis (strain CDC 1551 / Oshkosh).